The chain runs to 106 residues: MLSHSQKVVRLYRKAIKSIRDYSEDYDMFLLNAGDLRASLKAGKNETNPFAIQQMVKQLEDFNSYWEHPDPYIPCDGINGTKWQRNTAPAKYAVDPTNHLLENGRE.

The protein belongs to the complex I LYR family. As to quaternary structure, complex I is composed of about 45 different subunits.

The protein localises to the mitochondrion inner membrane. In terms of biological role, accessory subunit of the mitochondrial membrane respiratory chain NADH dehydrogenase (Complex I), that is believed to be not involved in catalysis. Complex I functions in the transfer of electrons from NADH to the respiratory chain. The immediate electron acceptor for the enzyme is believed to be ubiquinone. This chain is NADH dehydrogenase [ubiquinone] 1 beta subcomplex subunit 9 (ndufb9), found in Dictyostelium discoideum (Social amoeba).